Here is a 477-residue protein sequence, read N- to C-terminus: Probable F-box protein At5g25300 (477 aa).

Positions 346–377 form a coiled coil; that stretch reads VDMNKEDSQIEINEKETKINQEHDQSDETQAK. In terms of domain architecture, F-box spans 412 to 458; that stretch reads SPPWSELPGDILRSVFERLSFVDFQRAKQTCPIKRSKSNCLRLWLIT.

This chain is Probable F-box protein At5g25300, found in Arabidopsis thaliana (Mouse-ear cress).